A 248-amino-acid chain; its full sequence is UDP-2,3-diacylglucosamine hydrolase (248 aa).

Residues aspartate 7, histidine 9, aspartate 40, asparagine 78, and histidine 113 each coordinate Mn(2+). 78 to 79 (NR) lines the substrate pocket. Residues aspartate 121, serine 159, threonine 163, lysine 166, and histidine 194 each contribute to the substrate site. Histidine 194 and histidine 196 together coordinate Mn(2+).

Belongs to the LpxH family. Mn(2+) is required as a cofactor.

The protein resides in the cell inner membrane. The catalysed reaction is UDP-2-N,3-O-bis[(3R)-3-hydroxytetradecanoyl]-alpha-D-glucosamine + H2O = 2-N,3-O-bis[(3R)-3-hydroxytetradecanoyl]-alpha-D-glucosaminyl 1-phosphate + UMP + 2 H(+). The protein operates within glycolipid biosynthesis; lipid IV(A) biosynthesis; lipid IV(A) from (3R)-3-hydroxytetradecanoyl-[acyl-carrier-protein] and UDP-N-acetyl-alpha-D-glucosamine: step 4/6. Functionally, hydrolyzes the pyrophosphate bond of UDP-2,3-diacylglucosamine to yield 2,3-diacylglucosamine 1-phosphate (lipid X) and UMP by catalyzing the attack of water at the alpha-P atom. Involved in the biosynthesis of lipid A, a phosphorylated glycolipid that anchors the lipopolysaccharide to the outer membrane of the cell. This Pseudomonas savastanoi pv. phaseolicola (strain 1448A / Race 6) (Pseudomonas syringae pv. phaseolicola (strain 1448A / Race 6)) protein is UDP-2,3-diacylglucosamine hydrolase.